We begin with the raw amino-acid sequence, 110 residues long: UPF0122 protein lmo1802 (110 aa).

It belongs to the UPF0122 family.

Functionally, might take part in the signal recognition particle (SRP) pathway. This is inferred from the conservation of its genetic proximity to ftsY/ffh. May be a regulatory protein. The chain is UPF0122 protein lmo1802 from Listeria monocytogenes serovar 1/2a (strain ATCC BAA-679 / EGD-e).